We begin with the raw amino-acid sequence, 424 residues long: Chloroquine resistance transporter (424 aa).

A compositionally biased stretch (basic residues) spans 1-10; the sequence is MTILKKKKKG. The tract at residues 1 to 32 is disordered; it reads MTILKKKKKGSPQITPDERYRELDSHAQNESE. Over 1–57 the chain is Cytoplasmic; that stretch reads MTILKKKKKGSPQITPDERYRELDSHAQNESEIQEDVPISRKIANFLKLAYNEIREN. Over residues 16–29 the composition is skewed to basic and acidic residues; sequence PDERYRELDSHAQN. The chain crosses the membrane as a helical span at residues 58-78; the sequence is ISIYLLIIVYLCVCVMNKLLA. Over 79-89 the chain is Vacuolar; that stretch reads KRTLKKIGNYS. The N-linked (GlcNAc...) asparagine glycan is linked to Asn-87. The helical transmembrane segment at 90-110 threads the bilayer; the sequence is FVTSETHNCICMVVFFALYFM. The Cytoplasmic segment spans residues 111-124; the sequence is FGRRVMSAKERHRN. A helical membrane pass occupies residues 125–145; sequence FGVQFLLISLLDACSVIIAFI. Topologically, residues 146–153 are vacuolar; the sequence is GLTRTTGN. Residues 154-174 traverse the membrane as a helical segment; sequence IQSFVMQLSIPINMFFCFLIL. The Cytoplasmic segment spans residues 175 to 179; it reads RYRYH. A helical transmembrane segment spans residues 180 to 200; the sequence is LFNYVGAFIIVVTIAVVEFML. The Vacuolar segment spans residues 201–208; the sequence is SFETQEEN. The helical transmembrane segment at 209–229 threads the bilayer; the sequence is SIVFNLVLIASLIPLSFSNMT. Residues 230 to 246 are Cytoplasmic-facing; it reads REIVFKKYKINILRLNA. A helical membrane pass occupies residues 247–267; the sequence is VVSFFQIFTSCLMLPMYTLPF. Residues 268 to 316 lie on the Vacuolar side of the membrane; that stretch reads LKQINLPFSEIGTNIKNGFRCLFLGQNTIVENCGLGMSKMCDDCEGAWK. Intrachain disulfides connect Cys-288/Cys-311 and Cys-300/Cys-308. Residues 317 to 337 form a helical membrane-spanning segment; sequence TFIAYSFFNICDNLITSFIIE. Over 338–345 the chain is Cytoplasmic; that stretch reads KFSTMTYT. A helical transmembrane segment spans residues 346–366; it reads IVSCIQGPAIAIAYYFKFLAG. Over 367 to 376 the chain is Vacuolar; it reads DAVMQPRMLD. The chain crosses the membrane as a helical span at residues 377–397; that stretch reads FVTLFGYLFGSIIYRIGNIIL. The Cytoplasmic portion of the chain corresponds to 398–424; that stretch reads EKKRMMEAGNDDDSEGELTNADSIITH.

It belongs to the CRT-like transporter family.

The protein resides in the vacuole membrane. In terms of biological role, nutrient transporter. Involved in maintaining the osmotic homeostasis of the digestive vacuole. This Plasmodium vivax (strain Salvador I) protein is Chloroquine resistance transporter.